We begin with the raw amino-acid sequence, 109 residues long: Large ribosomal subunit protein uL24 (109 aa).

It belongs to the universal ribosomal protein uL24 family. As to quaternary structure, part of the 50S ribosomal subunit.

Its function is as follows. One of two assembly initiator proteins, it binds directly to the 5'-end of the 23S rRNA, where it nucleates assembly of the 50S subunit. Functionally, one of the proteins that surrounds the polypeptide exit tunnel on the outside of the subunit. The sequence is that of Large ribosomal subunit protein uL24 from Rickettsia canadensis (strain McKiel).